A 310-amino-acid polypeptide reads, in one-letter code: U-megalopygitoxin(8)-Mo15 (310 aa).

The signal sequence occupies residues 1–27 (MARFSSKNLTKLFQYLVLSLLSPVAFG).

Belongs to the megalysin family. Post-translationally, contains 3 disulfide bonds. In terms of tissue distribution, expressed by the venom apparatus.

It localises to the secreted. The protein localises to the target cell membrane. In terms of biological role, may function as a large pore-forming protein. In Megalopyge opercularis (Southern flannel moth), this protein is U-megalopygitoxin(8)-Mo15.